A 467-amino-acid chain; its full sequence is A-type ATP synthase subunit B (467 aa).

A disordered region spans residues 95 to 114 (GKGQPRDHMPLPPPEDFRDV).

The protein belongs to the ATPase alpha/beta chains family. Has multiple subunits with at least A(3), B(3), C, D, E, F, H, I and proteolipid K(x).

Its subcellular location is the cell membrane. Component of the A-type ATP synthase that produces ATP from ADP in the presence of a proton gradient across the membrane. The B chain is a regulatory subunit. This is A-type ATP synthase subunit B from Pyrobaculum aerophilum (strain ATCC 51768 / DSM 7523 / JCM 9630 / CIP 104966 / NBRC 100827 / IM2).